The following is a 468-amino-acid chain: UDP-N-acetylmuramoylalanine--D-glutamate ligase (468 aa).

Residue 127 to 133 (GTNGKTT) participates in ATP binding.

It belongs to the MurCDEF family.

It is found in the cytoplasm. The catalysed reaction is UDP-N-acetyl-alpha-D-muramoyl-L-alanine + D-glutamate + ATP = UDP-N-acetyl-alpha-D-muramoyl-L-alanyl-D-glutamate + ADP + phosphate + H(+). Its pathway is cell wall biogenesis; peptidoglycan biosynthesis. In terms of biological role, cell wall formation. Catalyzes the addition of glutamate to the nucleotide precursor UDP-N-acetylmuramoyl-L-alanine (UMA). The polypeptide is UDP-N-acetylmuramoylalanine--D-glutamate ligase (Prochlorococcus marinus (strain MIT 9312)).